A 476-amino-acid chain; its full sequence is WASH complex subunit 1 (476 aa).

The interval 1 to 54 (MTTVAQKHFLEGQTYSVPLIQPDLRREEAVQQVADALQYLQKVSGDIFNRISQR) is required for WASH complex assembly. Disordered regions lie at residues 273–412 (SAPS…QGGD) and 427–476 (GISG…DWES). The span at 284 to 296 (TFSTESVEPSQAD) shows a compositional bias: polar residues. Residues 302-333 (LLPPPPPPPPPPPPVMPTTVPPPPPLPQPTAP) show a composition bias toward pro residues. The tract at residues 354–476 (QGAPKEVVNP…GEEDEDDWES (123 aa)) is VCA. In terms of domain architecture, WH2 spans 366 to 388 (GRASLLESIRQAGGIGKANLRSV). The span at 387-403 (SVKERKLEKKKQKEQEQ) shows a compositional bias: basic and acidic residues. Residues 467–476 (GEEDEDDWES) show a composition bias toward acidic residues.

It belongs to the WASH1 family. Component of the WASH complex.

The protein resides in the early endosome membrane. It is found in the recycling endosome membrane. Acts as a nucleation-promoting factor at the surface of endosomes, where it recruits and activates the Arp2/3 complex to induce actin polymerization, playing a key role in the fission of tubules that serve as transport intermediates during endosome sorting. This Gallus gallus (Chicken) protein is WASH complex subunit 1.